The sequence spans 216 residues: Protein-L-isoaspartate O-methyltransferase (216 aa).

Ser61 is a catalytic residue.

Belongs to the methyltransferase superfamily. L-isoaspartyl/D-aspartyl protein methyltransferase family.

The protein localises to the cytoplasm. It catalyses the reaction [protein]-L-isoaspartate + S-adenosyl-L-methionine = [protein]-L-isoaspartate alpha-methyl ester + S-adenosyl-L-homocysteine. In terms of biological role, catalyzes the methyl esterification of L-isoaspartyl residues in peptides and proteins that result from spontaneous decomposition of normal L-aspartyl and L-asparaginyl residues. It plays a role in the repair and/or degradation of damaged proteins. The sequence is that of Protein-L-isoaspartate O-methyltransferase (pcm) from Pyrococcus abyssi (strain GE5 / Orsay).